Here is a 109-residue protein sequence, read N- to C-terminus: uncharacterized protein (109 aa).

Residues 1 to 23 (MKNYNFILISLFIIFFIILNISS) form the signal peptide. N-linked (GlcNAc...) asparagine glycosylation is present at Asn-27. The disordered stretch occupies residues 45–109 (YQEYMENRTP…KKDQQNQQQN (65 aa)). The span at 54 to 72 (PNEQQQQQQQQQNNNNPPQ) shows a compositional bias: low complexity. A compositionally biased stretch (basic and acidic residues) spans 94–103 (KLKEKLKKDQ).

The protein resides in the secreted. This is an uncharacterized protein from Dictyostelium discoideum (Social amoeba).